A 493-amino-acid polypeptide reads, in one-letter code: Guanosine-5'-triphosphate,3'-diphosphate pyrophosphatase (493 aa).

The protein belongs to the GppA/Ppx family. GppA subfamily.

The catalysed reaction is guanosine 3'-diphosphate 5'-triphosphate + H2O = guanosine 3',5'-bis(diphosphate) + phosphate + H(+). It participates in purine metabolism; ppGpp biosynthesis; ppGpp from GTP: step 2/2. Functionally, catalyzes the conversion of pppGpp to ppGpp. Guanosine pentaphosphate (pppGpp) is a cytoplasmic signaling molecule which together with ppGpp controls the 'stringent response', an adaptive process that allows bacteria to respond to amino acid starvation, resulting in the coordinated regulation of numerous cellular activities. In Salmonella choleraesuis (strain SC-B67), this protein is Guanosine-5'-triphosphate,3'-diphosphate pyrophosphatase.